The primary structure comprises 241 residues: Linker for activation of T-cells family member 1 (241 aa).

The Extracellular segment spans residues 1 to 4 (MEAD). The helical; Signal-anchor for type III membrane protein transmembrane segment at 5 to 28 (ALSPVELGLLLLPFVVMLLAALCV) threads the bilayer. Residues Cys27 and Cys30 are each lipidated (S-palmitoyl cysteine). Over 29-241 (RCRELPASYD…PDYENLQELN (213 aa)) the chain is Cytoplasmic. 6 positions are modified to phosphoserine: Ser41, Ser44, Ser87, Ser104, Ser109, and Ser112. Residues 78–139 (QPDLLPIPRS…DDYPEGYLVV (62 aa)) are disordered. A compositionally biased stretch (polar residues) spans 97–115 (MPSSRQNSDDANSVASYEN). Positions 124-133 (DEDEDEDDYP) are enriched in acidic residues. Residues 136–139 (YLVV) form an interaction with PLCG1 region. A Phosphotyrosine modification is found at Tyr175. 2 interaction with GRB2, GRAP2 and PIK3R1 regions span residues 175-178 (YVNV) and 195-198 (YVNV). Residues Ser199, Ser212, and Ser215 each carry the phosphoserine modification. The tract at residues 209-241 (ELASVTSQEVEDEEEEDVDGEEAPDYENLQELN) is disordered. Positions 217–233 (EVEDEEEEDVDGEEAPD) are enriched in acidic residues. Tyr234 is subject to Phosphotyrosine.

As to quaternary structure, when phosphorylated, interacts directly with the PIK3R1 subunit of phosphoinositide 3-kinase and the SH2 domains of GRB2, GRAP, GRAP2, PLCG1 and PLCG2. Interacts indirectly with CBL, SOS, VAV, and LCP2. Interacts with SHB, SKAP2 and CLNK. Interacts with FCGR1A. Interacts with GRB2, PLCG1 and THEMIS upon TCR activation in thymocytes. Interacts with THEMIS2. Post-translationally, phosphorylated on tyrosines by ZAP70 upon TCR activation, or by SYK upon other immunoreceptor activation; which leads to the recruitment of multiple signaling molecules. Is one of the most prominently tyrosine-phosphorylated proteins detected following TCR engagement. May be dephosphorylated by PTPRJ. In terms of processing, palmitoylation of Cys-27 and Cys-30 is required for raft targeting and efficient phosphorylation. Phosphorylated on tyrosines by ZAP70 upon TCR activation, or by SYK upon other immunoreceptor activation; which leads to the recruitment of multiple signaling molecules. Is one of the most prominently tyrosine-phosphorylated proteins detected following TCR engagement. May be dephosphorylated by PTPRJ. Phosphorylated by ITK leading to the recruitment of VAV1 to LAT-containing complexes. Post-translationally, 'Lys-63'-linked ubiquitinated by TRAF6. Expressed in NK cells. Present in lymph node, spleen and thymus (at protein level).

It is found in the cell membrane. Functionally, required for TCR (T-cell antigen receptor)- and pre-TCR-mediated signaling, both in mature T-cells and during their development. Involved in FCGR3 (low affinity immunoglobulin gamma Fc region receptor III)-mediated signaling in natural killer cells and FCER1 (high affinity immunoglobulin epsilon receptor)-mediated signaling in mast cells. Couples activation of these receptors and their associated kinases with distal intracellular events such as mobilization of intracellular calcium stores, PKC activation, MAPK activation or cytoskeletal reorganization through the recruitment of PLCG1, GRB2, GRAP2, and other signaling molecules. This is Linker for activation of T-cells family member 1 (Lat) from Rattus norvegicus (Rat).